The primary structure comprises 28 residues: Toxin a (28 aa).

Residues 3–28 (VPGNYPLDSYGNCYPCTILGDNQYCI) form the LCN-type CS-alpha/beta domain.

Belongs to the long (3 C-C) scorpion toxin superfamily. In terms of tissue distribution, expressed by the venom gland.

It is found in the secreted. Its function is as follows. Binds to sodium channels (Nav) and affects the channel activation process. The chain is Toxin a from Androctonus crassicauda (Arabian fat-tailed scorpion).